The following is a 199-amino-acid chain: MLVTLEGLDGSGKTTVWESLRASHDDGVTFTAEPTDSQYGQAVRRSESAADADPIAELFLFTADHADHLSRVVSPALDRGDVVISDRYSDSRYAYQGATLADTVPRAMEYVRGIHQPWTRPPDVTLYFDVDPDTGAARSGATNKFETAAFLADVRANYEQLIDYTPERFVRIDATQSPEAVIADAEAALADALPDDAWA.

7-14 (GLDGSGKT) contributes to the ATP binding site.

The protein belongs to the thymidylate kinase family.

The enzyme catalyses dTMP + ATP = dTDP + ADP. In Halobacterium salinarum (strain ATCC 29341 / DSM 671 / R1), this protein is Probable thymidylate kinase.